A 70-amino-acid chain; its full sequence is Mu-conotoxin-like Am3.4 (70 aa).

The signal sequence occupies residues M1–A20. Positions V21–R53 are excised as a propeptide. Disulfide bonds link C54-C69, C55-C65, and C61-C68. A 4-hydroxyproline; partial; in major form modification is found at P67. Position 69 is a cysteine amide (C69).

Belongs to the conotoxin M superfamily. In terms of processing, contains 3 disulfide bonds. As to expression, expressed by the venom duct.

Its subcellular location is the secreted. Mu-conotoxins block voltage-gated sodium channels (Nav). This Conus amadis (Amadis cone) protein is Mu-conotoxin-like Am3.4.